We begin with the raw amino-acid sequence, 428 residues long: uncharacterized protein (428 aa).

One can recognise a Glutaredoxin domain in the interval 241–351 (KEEEEQSVGK…KLLGGCERVE (111 aa)). The span at 386 to 401 (EDDDDDDDEGDDDESV) shows a compositional bias: acidic residues. Positions 386-405 (EDDDDDDDEGDDDESVKEER) are disordered.

This is an uncharacterized protein from Arabidopsis thaliana (Mouse-ear cress).